Reading from the N-terminus, the 365-residue chain is Gibberellin 20 oxidase 1-B (365 aa).

One can recognise a Fe2OG dioxygenase domain in the interval 199–299 (GNDSIMRLNY…RKSLAFFLCP (101 aa)). Fe cation-binding residues include H224, D226, and H280. The active site involves R290.

It belongs to the iron/ascorbate-dependent oxidoreductase family. GA20OX subfamily. Fe cation is required as a cofactor. It depends on L-ascorbate as a cofactor. As to expression, not detected in nodes and the ear of the elongating stem.

The enzyme catalyses gibberellin A12 + 2 2-oxoglutarate + 3 O2 + H(+) = gibberellin A9 + 2 succinate + 3 CO2 + 2 H2O. It carries out the reaction gibberellin A53 + 2 2-oxoglutarate + 3 O2 + H(+) = gibberellin A20 + 2 succinate + 3 CO2 + 2 H2O. Key oxidase enzyme in the biosynthesis of gibberellin that catalyzes the conversion of GA12 and GA53 to GA9 and GA20 respectively, via a three-step oxidation at C-20 of the GA skeleton. The polypeptide is Gibberellin 20 oxidase 1-B (GA20ox1B) (Triticum aestivum (Wheat)).